A 423-amino-acid chain; its full sequence is UPF0229 protein PST_0721 (423 aa).

The interval 84–109 (AGERIPRPQGGGGGQGAGQASNSGEG) is disordered.

Belongs to the UPF0229 family.

This is UPF0229 protein PST_0721 from Stutzerimonas stutzeri (strain A1501) (Pseudomonas stutzeri).